Consider the following 173-residue polypeptide: Photosystem I assembly protein Ycf3 (173 aa).

TPR repeat units follow at residues 35–68 (AFSY…EEDP), 72–105 (SYIL…NFKL), and 120–153 (GVQA…APDN).

It belongs to the Ycf3 family.

It localises to the plastid. The protein resides in the chloroplast thylakoid membrane. Its function is as follows. Essential for the assembly of the photosystem I (PSI) complex. May act as a chaperone-like factor to guide the assembly of the PSI subunits. The polypeptide is Photosystem I assembly protein Ycf3 (Porphyra purpurea (Red seaweed)).